Here is a 388-residue protein sequence, read N- to C-terminus: Succinate--CoA ligase [ADP-forming] subunit beta (388 aa).

Positions 9 to 244 constitute an ATP-grasp domain; it reads KQLFAEYGLP…PSQDDPREAH (236 aa). ATP-binding positions include K46, 53–55, E99, T102, and E107; that span reads GRG. Mg(2+) is bound by residues N199 and D213. Substrate is bound by residues N264 and 321-323; that span reads GIV.

Belongs to the succinate/malate CoA ligase beta subunit family. As to quaternary structure, heterotetramer of two alpha and two beta subunits. Mg(2+) serves as cofactor.

The enzyme catalyses succinate + ATP + CoA = succinyl-CoA + ADP + phosphate. It carries out the reaction GTP + succinate + CoA = succinyl-CoA + GDP + phosphate. Its pathway is carbohydrate metabolism; tricarboxylic acid cycle; succinate from succinyl-CoA (ligase route): step 1/1. In terms of biological role, succinyl-CoA synthetase functions in the citric acid cycle (TCA), coupling the hydrolysis of succinyl-CoA to the synthesis of either ATP or GTP and thus represents the only step of substrate-level phosphorylation in the TCA. The beta subunit provides nucleotide specificity of the enzyme and binds the substrate succinate, while the binding sites for coenzyme A and phosphate are found in the alpha subunit. The chain is Succinate--CoA ligase [ADP-forming] subunit beta from Pseudomonas syringae pv. tomato (strain ATCC BAA-871 / DC3000).